Reading from the N-terminus, the 501-residue chain is Orsellinic acid/F9775 biosynthesis cluster protein D (501 aa).

The tract at residues 137–189 is disordered; sequence EVTPTTEDEDDEENESENDEEEGDVDLEEQEDDNGGRQSTTVTTSPGPSAPSV. Acidic residues predominate over residues 142 to 169; it reads TEDEDDEENESENDEEEGDVDLEEQEDD. The segment covering 172-183 has biased composition (polar residues); it reads GRQSTTVTTSPG.

Its function is as follows. Part of the gene cluster that mediates the biosynthesis of orsellinic acid, as well as of the cathepsin K inhibitors F9775 A and F9775 B. The non-reducing polyketide synthase orsA produces orsellinic acid by condensing acetyl-CoA with 3 malonyl-CoA units. Further modifications by the decarboxylase orsB and the tyrosinase-like protein orsC lead to the production of F9775 A and F9775 B. The functions of orsD and orsE remain unclear since only orsB and orsC are required to convert orsellinic acid into F9775 A and F9775 B. The polypeptide is Orsellinic acid/F9775 biosynthesis cluster protein D (Emericella nidulans (strain FGSC A4 / ATCC 38163 / CBS 112.46 / NRRL 194 / M139) (Aspergillus nidulans)).